A 494-amino-acid chain; its full sequence is Rho GTPase-activating protein 19 (494 aa).

Ala-2 is modified (N-acetylalanine). Phosphoserine is present on residues Ser-7 and Ser-31. A Rho-GAP domain is found at 102–308 (MSLKRKEKGV…FMIKHSQKLF (207 aa)). 2 disordered regions span residues 349–368 (KSQKRNRVDSCPHQEETQHH) and 399–421 (QSLTQTPGREPSTSQVQKRARSR). Basic and acidic residues predominate over residues 354-368 (NRVDSCPHQEETQHH). Polar residues predominate over residues 399 to 415 (QSLTQTPGREPSTSQVQ). Phosphoserine is present on residues Ser-422, Ser-438, and Ser-470. A Phosphothreonine modification is found at Thr-478.

As to expression, strong expression in fetal heart, brain, placenta, lung, liver, skeletal muscle, kidney and pancreas. Weak expression in adult pancreas, spleen, thymus, and ovary.

The protein resides in the nucleus. In terms of biological role, GTPase activator for the Rho-type GTPases by converting them to an inactive GDP-bound state. The protein is Rho GTPase-activating protein 19 (ARHGAP19) of Homo sapiens (Human).